The following is a 439-amino-acid chain: GTPase Der (439 aa).

2 EngA-type G domains span residues 4 to 168 (PIVA…KDDE) and 177 to 352 (INIA…DNYN). Residues 10–17 (GRPNVGKS), 57–61 (DTGGI), 120–123 (NKID), 183–190 (GKPNVGKS), 230–234 (DTAGL), and 295–298 (NKWD) contribute to the GTP site. Residues 353 to 437 (KRVKTGVLND…GIKSEFRERK (85 aa)) enclose the KH-like domain.

The protein belongs to the TRAFAC class TrmE-Era-EngA-EngB-Septin-like GTPase superfamily. EngA (Der) GTPase family. As to quaternary structure, associates with the 50S ribosomal subunit.

Its function is as follows. GTPase that plays an essential role in the late steps of ribosome biogenesis. The protein is GTPase Der of Clostridium botulinum (strain ATCC 19397 / Type A).